Reading from the N-terminus, the 324-residue chain is Serine carboxypeptidase II-1 (324 aa).

Asn10 is a glycosylation site (N-linked (GlcNAc...) asparagine). Ser41 is an active-site residue. 2 disulfides stabilise this stretch: Cys109–Cys121 and Cys145–Cys170. Positions 150-162 are cleaved as a propeptide — linker peptide; sequence LHRRRLIKGRRPW. Residue Asn191 is glycosylated (N-linked (GlcNAc...) asparagine). Active-site residues include Asp239 and His291.

The protein belongs to the peptidase S10 family. In terms of assembly, carboxypeptidase II is a dimer, where each monomer is composed of two chains linked by a disulfide bond. Post-translationally, the linker peptide is endoproteolytically excised during enzyme maturation.

It catalyses the reaction Preferential release of a C-terminal arginine or lysine residue.. The polypeptide is Serine carboxypeptidase II-1 (CXP;2-1) (Hordeum vulgare (Barley)).